We begin with the raw amino-acid sequence, 427 residues long: MIYTAIDTFYLTDEQLRDSPSRKDGIDEATETALRVYGCDLIQESGILLKLPQAVMATAQVLFHRFYCKKSFVRFSVKRVAASCVWLAGKLEESPRRSKHIIIVFHRMECRRENVPIEHLDVFSKKYSDLKHDLVRTERHLLKEMGFICHVEHPHKFISNYLATLEAPELTQEAWNLANDSLRTTLCVRFKSEVVACGVVYAAARRHGVPLPEDPPWWNVFDADEAGIQEVCRVLAHLYSLPKSQYIQVYKDNDSFTHRRTSDTNASKESPATTVASDKGTPVPSSSSQEKDALIKAGSDKVKEKGDDDGKTLPSEPNGKEGPAVNLKSEKSESNVDRSRERERDRSRGRDRDSRGRDSDRDSKGRDSDRERERDREADRDRQRRHHSKDRSSGYSDKEKSRHRSSRDRGDHYSSHSSRDKDRHRRQ.

The interval 258-427 (HRRTSDTNAS…SRDKDRHRRQ (170 aa)) is disordered. The segment covering 263–276 (DTNASKESPATTVA) has biased composition (polar residues). 4 stretches are compositionally biased toward basic and acidic residues: residues 289 to 311 (QEKD…DDGK), 328 to 382 (KSEK…DRDR), 390 to 400 (DRSSGYSDKEK), and 407 to 421 (RDRG…SRDK).

Belongs to the cyclin family. Cyclin L subfamily.

In Oryza sativa subsp. japonica (Rice), this protein is Cyclin-L1-1 (CYCL1-1).